A 633-amino-acid polypeptide reads, in one-letter code: MSDDFVVPTYEVGGSDSGSDQDISDIEEGSFNGISATPLPTADVEYVSEASPMDATASLGYLSGAEGANLYVAREGANYFNDAANKAVVLCLHSYEQLAISGVFKLQVMKGGITYNSIHYNCGLHTYDFWHPLSESIPPIAASFAADWEEHSYGLSPWLPADIKEEYECILRISEGSNIGDVGRLMAELGQLWTRHTGCTFSILRPEDYARPLILNKDWDNLQAELMIHHMNSEHDMRVMCIGGKNSGKSTLLRLLLQKFLHGNKSTTKATGVSHEADVVNYLDMDPGQPEYSAPDSISWSKLTSETLSLGQHLAQGHREMIQTTYIGSSTPQTWPEMYLTAMEHIIHKWEMEGQMNTALLNLPGWIKGFGITIINKAMELFKPTHIIFLTHGGKLISKELVVPNMFETMQKGKYKPMIYNLQAFTQHNIPGLPAQDPRYHAANIRSFRLLAHLHRLSEQSYYPGPLLSSPPLQVSFGSQGIMAFRFLQDPSSGYHQDDISAALQGCVVCLYHSKMPPDIDMCGVFPMLKHSADYTSMDFVTLALIHSIDVERKFMNIYIPGHVSGRVHSLKNNFVLVRGATDLPLCELYPQKLLSSSYRNREIPYVSFSKRKKYEYVWKIRKNVRRRGHYNK.

243-250 (GGKNSGKS) is a binding site for ATP.

Belongs to the Clp1 family. NOL9/GRC3 subfamily.

It localises to the nucleus. The protein localises to the nucleolus. In terms of biological role, polynucleotide 5'-kinase involved in rRNA processing. This Eremothecium gossypii (strain ATCC 10895 / CBS 109.51 / FGSC 9923 / NRRL Y-1056) (Yeast) protein is Polynucleotide 5'-hydroxyl-kinase GRC3 (GRC3).